A 271-amino-acid polypeptide reads, in one-letter code: Ubiquitin thioesterase OTUB1 (271 aa).

Residue alanine 2 is modified to N-acetylalanine. Position 16 is a phosphoserine (serine 16). Phosphotyrosine is present on tyrosine 26. One can recognise an OTU domain in the interval 80 to 271 (SYIRKTRPDG…RPGHYDILYK (192 aa)). Aspartate 88 is an active-site residue. Residue cysteine 91 is the Nucleophile of the active site. Ubiquitin-conjugating enzyme E2 binding stretches follow at residues 130–138 (FTEFTIEDF) and 169–177 (DYLVVYLRL). A free ubiquitin binding region spans residues 189–195 (FFEHFIE). Residues 206–213 (QEVEPMCK) form a ubiquitin-conjugating enzyme E2 binding region. Free ubiquitin binding regions lie at residues 214-221 (ESDHIHII) and 245-251 (NPHVFPE). Residue histidine 265 is part of the active site.

This sequence belongs to the peptidase C65 family. In terms of assembly, interacts with RNF128. Forms a ternary complex with RNF128 and USP8. Interacts with FUS and RACK1. Interacts with UBE2D1/UBCH5A, UBE2W/UBC16 and UBE2N/UBC13. Phosphorylation at Tyr-26 by SRC and SRMS promotes deubiquitination of RPTOR via a non-catalytic process.

It is found in the cytoplasm. It carries out the reaction Thiol-dependent hydrolysis of ester, thioester, amide, peptide and isopeptide bonds formed by the C-terminal Gly of ubiquitin (a 76-residue protein attached to proteins as an intracellular targeting signal).. By free ubiquitin: binding of free ubiquitin triggers conformational changes in the OTU domain and formation of a ubiquitin-binding helix in the N-terminus, promoting binding of the conjugated donor ubiquitin in UBE2N/UBC13 to OTUB1. Its function is as follows. Hydrolase that can specifically remove compared to 'Lys-48'-linked conjugated ubiquitin from proteins and plays an important regulatory role at the level of protein turnover by preventing degradation. Regulator of T-cell anergy, a phenomenon that occurs when T-cells are rendered unresponsive to antigen rechallenge and no longer respond to their cognate antigen. Acts via its interaction with RNF128/GRAIL. Surprisingly, it regulates RNF128-mediated ubiquitination, but does not deubiquitinate polyubiquitinated RNF128. Deubiquitinates estrogen receptor alpha (ESR1). Mediates deubiquitination of 'Lys-48'-linked polyubiquitin chains, but not 'Lys-63'-linked polyubiquitin chains. Not able to cleave di-ubiquitin. Also capable of removing NEDD8 from NEDD8 conjugates, but with a much lower preference compared to 'Lys-48'-linked ubiquitin. Functionally, plays a key non-catalytic role in DNA repair regulation by inhibiting activity of RNF168, an E3 ubiquitin-protein ligase that promotes accumulation of 'Lys-63'-linked histone H2A and H2AX at DNA damage sites. Inhibits RNF168 independently of ubiquitin thioesterase activity by binding and inhibiting UBE2N/UBC13, the E2 partner of RNF168, thereby limiting spreading of 'Lys-63'-linked histone H2A and H2AX marks. Inhibition occurs by binding to free ubiquitin: free ubiquitin acts as an allosteric regulator that increases affinity for UBE2N/UBC13 and disrupts interaction with UBE2V1. The OTUB1-UBE2N/UBC13-free ubiquitin complex adopts a configuration that mimics a cleaved 'Lys48'-linked di-ubiquitin chain. Acts as a regulator of mTORC1 and mTORC2 complexes. When phosphorylated at Tyr-26, acts as an activator of the mTORC1 complex by mediating deubiquitination of RPTOR via a non-catalytic process: acts by binding and inhibiting the activity of the ubiquitin-conjugating enzyme E2 (UBE2D1/UBCH5A, UBE2W/UBC16 and UBE2N/UBC13), thereby preventing ubiquitination of RPTOR. Can also act as an inhibitor of the mTORC1 and mTORC2 complexes in response to amino acids by mediating non-catalytic deubiquitination of DEPTOR. This Mus musculus (Mouse) protein is Ubiquitin thioesterase OTUB1 (Otub1).